Reading from the N-terminus, the 304-residue chain is Transcription factor BEE 2 (304 aa).

Residues 74 to 132 form a disordered region; the sequence is FHMEPVKNNGHSRAITLQNKRKPEGKTEKREKKKIKAEDETEPSMKGKSNMSNTETSSE. The span at 82-91 shows a compositional bias: polar residues; it reads NGHSRAITLQ. The segment covering 94–103 has biased composition (basic and acidic residues); that stretch reads RKPEGKTEKR. Positions 120–132 are enriched in polar residues; the sequence is GKSNMSNTETSSE. The 51-residue stretch at 147-197 folds into the bHLH domain; sequence EATDRHSLAERARREKISKKMKCLQDIVPGCNKVTGKAGMLDEIINYVQSL.

As to quaternary structure, homodimer. In terms of tissue distribution, expressed in stems and flowers.

Its subcellular location is the nucleus. Functionally, positive regulator of brassinosteroid signaling. The chain is Transcription factor BEE 2 (BEE2) from Arabidopsis thaliana (Mouse-ear cress).